Consider the following 1024-residue polypeptide: Seizure 6-like protein (1024 aa).

The first 28 residues, 1-28, serve as a signal peptide directing secretion; the sequence is MPAARPPAAGLRGISLFLALLLGSPAAA. Residues 29–958 are Extracellular-facing; sequence LERDALPEGD…ETSLEGGNMA (930 aa). Disordered stretches follow at residues 33–77, 108–184, and 212–234; these read ALPE…SQSA, RPKH…EVPL, and AHTL…EAPQ. Residue Ser-49 is glycosylated (O-linked (GalNAc...) serine). Residues 56-66 show a composition bias toward basic and acidic residues; that stretch reads SPGKEHPEERV. The span at 110 to 120 shows a compositional bias: basic residues; sequence KHALPPKKKLP. Positions 138–162 are enriched in polar residues; sequence SAATVQRAGSQPASQGLDLLSSSTE. O-glycosylated at one site regions lie at residues 147–161 and 176–180; these read SQPA…SSST and SEEAS. Cysteines 281 and 308 form a disulfide. The CUB 1 domain occupies 281–389; it reads CSVSFSNPEG…GTFQLHYQAF (109 aa). Residues Asn-311, Asn-328, and Asn-350 are each glycosylated (N-linked (GlcNAc...) asparagine). One can recognise a Sushi 1 domain in the interval 391 to 450; that stretch reads LSCNFPRRPDSGDVTVMDLHSGGVAHFHCHLGYELQGAKMLTCINASKPHWSSQEPICSA. 2 disulfides stabilise this stretch: Cys-393–Cys-433 and Cys-419–Cys-448. N-linked (GlcNAc...) asparagine glycans are attached at residues Asn-435, Asn-458, Asn-474, Asn-514, Asn-576, Asn-618, Asn-674, and Asn-742. The region spanning 452–562 is the CUB 2 domain; the sequence is CGGAVHNATI…STFNIRFEAF (111 aa). A Sushi 2 domain is found at 565 to 626; the sequence is GHCYEPYIQN…WNDTEPLCRA (62 aa). 2 disulfide bridges follow: Cys-567-Cys-609 and Cys-594-Cys-624. Residues 628 to 739 enclose the CUB 3 domain; sequence CGGELSAVAG…QGFIMNYIEV (112 aa). 3 consecutive Sushi domains span residues 743–802, 804–867, and 871–932; these read DSCS…FCEK, MYCT…HCVS, and LACD…VCKV. 6 cysteine pairs are disulfide-bonded: Cys-745/Cys-787, Cys-773/Cys-800, Cys-806/Cys-848, Cys-834/Cys-865, Cys-873/Cys-915, and Cys-901/Cys-930. A helical transmembrane segment spans residues 959-979; it reads LAIFIPVLIISLLLGGAYIYI. The Cytoplasmic portion of the chain corresponds to 980–1024; the sequence is TRCRYYSNLRLPLMYSHPYSQITVETEFDNPIYETGETREYEVSI.

It belongs to the SEZ6 family. In terms of processing, O-glycosylated. As to expression, widely expressed, including adult and fetal brains and lungs. Not expressed in all lung cancer cell lines.

It localises to the endoplasmic reticulum membrane. Functionally, may contribute to specialized endoplasmic reticulum functions in neurons. The protein is Seizure 6-like protein (SEZ6L) of Homo sapiens (Human).